The primary structure comprises 209 residues: Small ribosomal subunit protein uS4 (209 aa).

The S4 RNA-binding domain maps to 99 to 162; sequence RRLDNMVYRL…RKNNKIIEAM (64 aa).

The protein belongs to the universal ribosomal protein uS4 family. As to quaternary structure, part of the 30S ribosomal subunit. Contacts protein S5. The interaction surface between S4 and S5 is involved in control of translational fidelity.

Functionally, one of the primary rRNA binding proteins, it binds directly to 16S rRNA where it nucleates assembly of the body of the 30S subunit. In terms of biological role, with S5 and S12 plays an important role in translational accuracy. This is Small ribosomal subunit protein uS4 from Syntrophus aciditrophicus (strain SB).